The chain runs to 555 residues: Disabled homolog 1 (555 aa).

Residues 1-26 (MSTETELQVAVKTSAKKDSRKKGQDR) are disordered. Basic and acidic residues predominate over residues 15–26 (AKKDSRKKGQDR). Positions 36–189 (KGEGVRYKAK…CEQAVYQTIL (154 aa)) constitute a PID domain. 3 positions are modified to phosphotyrosine: Y198, Y220, and Y232. Disordered regions lie at residues 384-410 (LTPL…RQKM), 418-437 (FQMA…PSLT), and 468-555 (NLTP…QAGS). The span at 391–403 (PGTSDSTRPSPQT) shows a compositional bias: polar residues. Low complexity-rich tracts occupy residues 470-479 (TPVTSTTPST) and 487-501 (PRQS…SHAS). S491 carries the phosphoserine; by CDK5 modification. Acidic residues predominate over residues 504-513 (TTDDIFEEGF).

As to quaternary structure, associates with the SH2 domains of SRC, FYN and ABL. Interacts (phosphorylated on tyrosine residues) with CRK and CRKL (via respective SH2 domain). Interacts with DAB2IP, SIAH1, LRP8 and VLDLR. Interacts with LRP1. Interacts with APLP1 (via NPXY motif). Interacts with DAB2IP. Interacts with ZSWIM8. In terms of processing, phosphorylated by FYN on Tyr-198 and Tyr-220 upon reelin induction in embryonic neurons. Also phosphorylated on Ser-491 independently of reelin signaling. Post-translationally, ubiquitinated by various cullin-5-RING E3 ubiquitin-protein ligase complexes (ECS complexes) following ligand-binding and phosphorylation, leading to its degradation. Ubiquitinated by the ECS(SOCS7) complex in the cortical plate of the developing cerebral cortex following ligand-binding and phosphorylation by FYN, leading to its degradation by the proteasome. Recognized by ZSWIM8 through a disorder targets misorder mechanism that eliminates misfolded DAB1 via ubiquitination and proteasomal degradation.

The protein resides in the cytoplasm. Signaling adapter of the reelin-mediated signaling pathway, which regulates the migration and differentiation of postmitotic neurons during brain development. Mediates intracellular transduction of Reelin signaling following reelin (RELN)-binding to its receptor: acts by docking proteins through its phosphotyrosine residues and PID domain. This Macaca fascicularis (Crab-eating macaque) protein is Disabled homolog 1 (DAB1).